The following is a 152-amino-acid chain: UPF0178 protein SAS0646 (152 aa).

It belongs to the UPF0178 family.

The polypeptide is UPF0178 protein SAS0646 (Staphylococcus aureus (strain MSSA476)).